Reading from the N-terminus, the 288-residue chain is Phytanoyl-CoA dioxygenase domain-containing protein 1 homolog (288 aa).

2-oxoglutarate is bound by residues Lys95, Met134, 149 to 151 (HVD), and Trp167. Fe cation-binding residues include His149 and Asp151. Position 242 (His242) interacts with Fe cation. Residues Ser244 and Arg253 each coordinate 2-oxoglutarate.

Belongs to the PhyH family. PHYHD1 subfamily. Fe cation serves as cofactor.

Functionally, has alpha-ketoglutarate-dependent dioxygenase activity. Does not show detectable activity towards fatty acid CoA thioesters. Is not expected to be active with phytanoyl CoA. The chain is Phytanoyl-CoA dioxygenase domain-containing protein 1 homolog from Caenorhabditis briggsae.